Reading from the N-terminus, the 681-residue chain is Envelope glycoprotein (681 aa).

Residues 1-18 (MKTTCFLISLILIQGTKN) form the signal peptide. At 19-648 (LPILEIASNN…GLGGKWWTSD (630 aa)) the chain is on the extracellular side. 5 cysteine pairs are disulfide-bonded: Cys37/Cys610, Cys92/Cys119, Cys211/Cys226, Cys512/Cys557, and Cys602/Cys609. The receptor-binding stretch occupies residues 38-188 (SGTLQKTEDV…FSRQGQGYRH (151 aa)). Residues Asn94, Asn171, Asn190, Asn202, Asn207, Asn219, Asn223, and Asn255 are each glycosylated (N-linked (GlcNAc...) asparagine; by host). The tract at residues 223–427 (NQTCAPSKIP…PPTPSSTAQH (205 aa)) is disordered. Polar residues-rich tracts occupy residues 244–259 (LTST…TTDP), 281–290 (TSDAVTKQGL), and 308–318 (GGNNTNHSQDA). The interval 277-455 (EPHTTSDAVT…PFLDGLINAP (179 aa)) is mucin-like region. Asn310, Asn313, Asn325, Asn326, Asn337, Asn344, Asn345, Asn350, Asn360, Asn408, and Asn487 each carry an N-linked (GlcNAc...) asparagine; by host glycan. Residues 337–347 (NTTTISTNNTS) are compositionally biased toward low complexity. Positions 348 to 414 (KHNFSTLSAP…TAPNTTNEHF (67 aa)) are enriched in polar residues. Residues 529–549 (GLSWIPFFGPGIEGLYTAVLI) are fusion peptide. Residue Asn564 is glycosylated (N-linked (GlcNAc...) asparagine; by host). An N-linked (GlcNAc...) asparagine; by host glycan is attached at Asn619. Residues 649–669 (WGVLTNLGILLLLSIAVLIAL) form a helical membrane-spanning segment. Over 670–681 (SCICRIFTKYIG) the chain is Cytoplasmic. 2 S-palmitoyl cysteine; by host lipidation sites follow: Cys671 and Cys673.

Belongs to the filoviruses glycoprotein family. Homotrimer; each monomer consists of a GP1 and a GP2 subunit linked by disulfide bonds. The resulting peplomers (GP1,2) protrude from the virus surface as spikes. GP1,2 interacts with human CD209 and CLEC4M (collectively referred to as DC-SIGN(R)). Asialoglycoprotein receptor (ASGP-R) may be a liver-specific receptor for GP1,2. Members of the Tyro3 receptor tyrosine kinase family may be cell entry factors interacting with GP1,2. N-glycosylated. Post-translationally, O-glycosylated in the mucin-like region. In terms of processing, specific enzymatic cleavages in vivo yield mature proteins. The precursor is processed into GP1 and GP2 by host cell furin in the trans Golgi, and maybe by other host proteases, to yield the mature GP1 and GP2 proteins. The cleavage site corresponds to the furin optimal cleavage sequence [KR]-X-[KR]-R. GP1 is phosphorylated on serine residues between residues 260 and 273.

The protein localises to the virion membrane. The protein resides in the host cell membrane. Functionally, GP1 is responsible for binding to the receptor(s) on target cells. Interacts with CD209/DC-SIGN and CLEC4M/DC-SIGNR which act as cofactors for virus entry into the host cell. Binding to CD209 and CLEC4M, which are respectively found on dendritic cells (DCs), and on endothelial cells of liver sinusoids and lymph node sinuses, facilitate infection of macrophages and endothelial cells. These interactions not only facilitate virus cell entry, but also allow capture of viral particles by DCs and subsequent transmission to susceptible cells without DCs infection (trans infection). In terms of biological role, GP2 acts as a class I viral fusion protein. Under the current model, the protein has at least 3 conformational states: pre-fusion native state, pre-hairpin intermediate state, and post-fusion hairpin state. During viral and target cell membrane fusion, the coiled coil regions (heptad repeats) assume a trimer-of-hairpins structure, positioning the fusion peptide in close proximity to the C-terminal region of the ectodomain. The formation of this structure appears to drive apposition and subsequent fusion of viral and target cell membranes. Responsible for penetration of the virus into the cell cytoplasm by mediating the fusion of the membrane of the endocytosed virus particle with the endosomal membrane. Low pH in endosomes induces an irreversible conformational change in GP2, releasing the fusion hydrophobic peptide. The sequence is that of Envelope glycoprotein (GP) from Lake Victoria marburgvirus (strain Musoke-80) (MARV).